The primary structure comprises 180 residues: Large ribosomal subunit protein uL6 (180 aa).

It belongs to the universal ribosomal protein uL6 family. As to quaternary structure, part of the 50S ribosomal subunit.

This protein binds to the 23S rRNA, and is important in its secondary structure. It is located near the subunit interface in the base of the L7/L12 stalk, and near the tRNA binding site of the peptidyltransferase center. In Clostridium botulinum (strain Alaska E43 / Type E3), this protein is Large ribosomal subunit protein uL6.